The sequence spans 199 residues: HTH-type transcriptional repressor NemR (199 aa).

Residues 7–67 (HDTREHLLAT…AMLERHYAAY (61 aa)) form the HTH tetR-type domain. A DNA-binding region (H-T-H motif) is located at residues 30-49 (GLSELLKTAEVPKGSFYHYF).

Its function is as follows. Involved in response to both electrophiles and reactive chlorine species (RCS). Represses the transcription of the nemRA-gloA operon by binding to the NemR box. This Escherichia coli O6:H1 (strain CFT073 / ATCC 700928 / UPEC) protein is HTH-type transcriptional repressor NemR (nemR).